Here is a 116-residue protein sequence, read N- to C-terminus: Protein Wnt-5(I) (116 aa).

A lipid anchor (O-palmitoleoyl serine; by PORCN) is attached at serine 1. Asparagine 69 is a glycosylation site (N-linked (GlcNAc...) asparagine). A disulfide bridge links cysteine 82 with cysteine 97.

Belongs to the Wnt family. Palmitoleoylation is required for efficient binding to frizzled receptors. Depalmitoleoylation leads to Wnt signaling pathway inhibition.

The protein resides in the secreted. Its subcellular location is the extracellular space. It localises to the extracellular matrix. In terms of biological role, ligand for members of the frizzled family of seven transmembrane receptors. Probable developmental protein. May be a signaling molecule which affects the development of discrete regions of tissues. Is likely to signal over only few cell diameters. This is Protein Wnt-5(I) (WNT-5(I)) from Eptatretus stoutii (Pacific hagfish).